Consider the following 804-residue polypeptide: uncharacterized protein (804 aa).

10 consecutive transmembrane segments (helical) span residues 15-35 (LLIVWLALSLAVACVLALGNI), 243-263 (FLLLSALLTLLLAVAAVAVAM), 301-321 (LSAVTGGAIGLLFENVLMVLL), 333-353 (SLWPWLWALGTMTVISLLVGL), 381-401 (FYLPIVSVVVVLLLAGLMGGS), 403-423 (LLWAVLAGAVVLALLCGVLGW), 453-473 (TLSQLSAFSLSFMLLALLLVL), 680-700 (ALEVMVVLVTACGMLLLLAQV), 734-754 (MLGFVSGLVAAIGAETALAVL), and 769-789 (LWIVLPCSGALLLSLFGGWLG).

It belongs to the ABC-4 integral membrane protein family.

It localises to the cell membrane. This is an uncharacterized protein from Escherichia coli (strain K12).